Here is a 578-residue protein sequence, read N- to C-terminus: Signal peptide peptidase-like 2B (578 aa).

Positions 1-19 are cleaved as a signal peptide; it reads MAAARLAAALLLLAAQVAC. Residues 20-168 are Lumenal-facing; the sequence is EFGVLRVVSQ…APSEPVMDYN (149 aa). Residues 61–145 form the PA domain; the sequence is LRDLSTTQLC…LLSHRDLQDI (85 aa). Residues asparagine 91 and asparagine 123 are each glycosylated (N-linked (GlcNAc...) asparagine). The chain crosses the membrane as a helical span at residues 169 to 189; the sequence is MVIIFVMAVGTVAIGGYWAGS. Residues 190-216 lie on the Cytoplasmic side of the membrane; that stretch reads HDVKKYMKHKRDDGPEKQEDEAVDVTP. Residues 217-237 traverse the membrane as a helical segment; that stretch reads VMICVFVVMCCFMLVLLYYFY. The Lumenal portion of the chain corresponds to 238 to 239; that stretch reads DR. Residues 240–260 traverse the membrane as a helical segment; the sequence is LVYVIIGIFCLASSTGLYSCL. Over 261–286 the chain is Cytoplasmic; it reads APFVRKLPFCTCRVPDNNLPYFHKRP. The helical transmembrane segment at 287-307 threads the bilayer; sequence QARMLLLALFCVTVSVVWGIF. At 308-312 the chain is on the lumenal side; sequence RNEDQ. A helical transmembrane segment spans residues 313–333; it reads WAWVLQDTLGIAFCLYMLKTI. Residues 334–341 are Cytoplasmic-facing; it reads RLPTFKAC. Residues 342 to 362 traverse the membrane as a helical segment; that stretch reads TLLLLVLFIYDIFFVFITPFL. Aspartate 352 is an active-site residue. Over 363-405 the chain is Lumenal; it reads TKSGNSIMVEVATGPSNSSTHEKLPMVLKVPRLNTSPLSLCDR. Residues 406–426 traverse the membrane as a helical segment; sequence PFSLLGFGDILVPGLLVAYCH. The active site involves aspartate 414. Residues 427–438 lie on the Cytoplasmic side of the membrane; it reads RFDIQVQSSRIY. The chain crosses the membrane as a helical span at residues 439–459; that stretch reads FVACTIAYGLGLLVTFVALVL. At 460-463 the chain is on the lumenal side; that stretch reads MQRG. A helical transmembrane segment spans residues 464–484; that stretch reads QPALLYLVPCTLLTSCTVALW. The PAL motif lies at 465-467; the sequence is PAL. Over 485–578 the chain is Cytoplasmic; sequence RRELGAFWTG…IPVVKPETSA (94 aa). The segment at 502-578 is disordered; the sequence is PQTPWAATQG…IPVVKPETSA (77 aa). A compositionally biased stretch (low complexity) spans 520–529; that stretch reads SSLSEQPPSE.

The protein belongs to the peptidase A22B family. Monomer. Homodimer. Interacts with ITM2B and TNF. Glycosylated.

The protein resides in the cell membrane. The protein localises to the golgi apparatus membrane. It localises to the lysosome membrane. Its subcellular location is the endosome membrane. It is found in the membrane. In terms of biological role, intramembrane-cleaving aspartic protease (I-CLiP) that cleaves type II membrane signal peptides in the hydrophobic plane of the membrane. Functions in ITM2B and TNF processing. Catalyzes the intramembrane cleavage of the anchored fragment of shed TNF-alpha (TNF), which promotes the release of the intracellular domain (ICD) for signaling to the nucleus. May play a role in the regulation of innate and adaptive immunity. The protein is Signal peptide peptidase-like 2B of Mus musculus (Mouse).